The sequence spans 253 residues: Probable U3 small nucleolar RNA-associated protein 11 (253 aa).

The disordered stretch occupies residues 1-21; that stretch reads MAAAFRKAVKSRQREYRERSQ. Residues lysine 74, lysine 83, and lysine 86 each participate in a glycyl lysine isopeptide (Lys-Gly) (interchain with G-Cter in SUMO2) cross-link. A Phosphothreonine modification is found at threonine 90. Residues lysine 103, lysine 120, lysine 143, lysine 144, lysine 180, lysine 211, lysine 218, lysine 235, and lysine 236 each participate in a glycyl lysine isopeptide (Lys-Gly) (interchain with G-Cter in SUMO2) cross-link. Serine 241 carries the phosphoserine modification. Lysine 246 participates in a covalent cross-link: Glycyl lysine isopeptide (Lys-Gly) (interchain with G-Cter in SUMO2).

It belongs to the UTP11 family. As to quaternary structure, part of the small subunit (SSU) processome, composed of more than 70 proteins and the RNA chaperone small nucleolar RNA (snoRNA) U3.

The protein resides in the nucleus. It localises to the nucleolus. Its function is as follows. Part of the small subunit (SSU) processome, first precursor of the small eukaryotic ribosomal subunit. During the assembly of the SSU processome in the nucleolus, many ribosome biogenesis factors, an RNA chaperone and ribosomal proteins associate with the nascent pre-rRNA and work in concert to generate RNA folding, modifications, rearrangements and cleavage as well as targeted degradation of pre-ribosomal RNA by the RNA exosome. Involved in nucleolar processing of pre-18S ribosomal RNA. In Rattus norvegicus (Rat), this protein is Probable U3 small nucleolar RNA-associated protein 11.